A 656-amino-acid polypeptide reads, in one-letter code: MAPLTKKTNGKRSAKEVSHSEKKLAKKPRISIDSSDEESELSKKEDAVSSSSDDDDLDDLSTSDSEAEEEADELDISDDSEEHENENEEKEGKDKSEGGENGNHTEQRKLLKERKMQRKSGTQVQQIKSVWERLRVKTPPLPKQIREKLSNEIWELSKDCISDLVLKHDASRIVQTLVKYSSKDRREQIVDALKGKFYVLATSAYGKYLLVKLLHYGSRSSRQTIINELHGSLRKLMRHREGAYVVEDLFVLYATHEQRQQMIKEFWGSEYAVFRETHKDLTIEKVCESSIEKRNIIARNLIGTITASVEKGSTGFQILHAAMREYVKIANEKEISEMIELLHEQFAELVHTPEGSDVACTLVARANAKERKLILKALKNHAEKLIKNEYGNIVFITILNCVDDTVLVFKTFSPTVKEHLQEFIIDKFGRRPWLYILLGLDGKYFSPIVKNELLRYIELSKATSKKDPLQRRHELLSKFAPMFLSTISKDYSSILTENLGCQFIAEVLINDELYAQLNEKDQEKYQQVLNNILTTFKGDITEEEHPIHRAFSTRLLKALIQGGKWNNKEKKVIPLKNVQGLGVPFAEKLYDEIIDSSNLLEWINNADSSFTIVALYETLKDQKEGKPFLKDLRGVQSKITTDESNKGSQLLAKLLK.

The tract at residues 1-107 (MAPLTKKTNG…GGENGNHTEQ (107 aa)) is disordered. Residues 13-23 (SAKEVSHSEKK) are compositionally biased toward basic and acidic residues. Phosphoserine; by CK2 is present on residues Ser-31, Ser-34, and Ser-35. A phosphoserine mark is found at Ser-34 and Ser-35. Over residues 52–89 (SDDDDLDDLSTSDSEAEEEADELDISDDSEEHENENEE) the composition is skewed to acidic residues. The span at 90–107 (KEGKDKSEGGENGNHTEQ) shows a compositional bias: basic and acidic residues. The 351-residue stretch at 133–483 (RLRVKTPPLP…ELLSKFAPMF (351 aa)) folds into the PUM-HD domain. Pumilio repeat units lie at residues 155-191 (ELSK…QIVD), 192-227 (ALKG…TIIN), 228-264 (ELHG…QMIK), 340-376 (ELLH…LILK), 377-413 (ALKN…KTFS), and 415-450 (TVKE…PIVK).

Belongs to the PUF6 family. Component of the ASH1 mRNP composed of at least PUF6, SHE2, SHE3, SHE1 and the ASH1 mRNA. Interacts with SHE2 and FUN12. Post-translationally, phosphorylation by CK2 relieves translational repression activity.

The protein localises to the bud tip. It localises to the nucleus. The protein resides in the nucleolus. In terms of biological role, RNA-binding protein involved in post-transcriptional regulation. Component of the ASH1 mRNP which transports the ASH1 mRNA to the distal tip of the bud, where the ASH1 protein is translated and targeted to the daughter cell nucleus. Binds to the ASH1 3'-UTR containing the PUF consensus UUGU segment and represses its translation. This silencing of ASH1 mRNA is critical for asymmetric seggregation of ASH1 to the daughter cell nucleus. The sequence is that of Pumilio homology domain family member 6 (PUF6) from Saccharomyces cerevisiae (strain ATCC 204508 / S288c) (Baker's yeast).